The sequence spans 397 residues: Multidrug efflux pump subunit AcrA (397 aa).

The first 24 residues, 1–24 (MNKNRGFTPLAVVLMLSGSLALTG), serve as a signal peptide directing secretion. Residue Cys25 is the site of N-palmitoyl cysteine attachment. Cys25 carries S-diacylglycerol cysteine lipidation. Residues 98-172 (PATYQATYDS…AVETARINLA (75 aa)) are a coiled coil. A disordered region spans residues 377–397 (EVTADNNQQAASGAQPEQSKS). The segment covering 379–397 (TADNNQQAASGAQPEQSKS) has biased composition (polar residues).

This sequence belongs to the membrane fusion protein (MFP) (TC 8.A.1) family. In terms of assembly, monomeric in solution. Homotrimeric; interacts independently with AcrB and TolC as well as AcrZ. Part of the AcrA-AcrB-TolC efflux pump.

Its subcellular location is the cell inner membrane. Its function is as follows. AcrA-AcrB-AcrZ-TolC is a drug efflux protein complex with broad substrate specificity that uses the proton motive force to export substrates. This subunit may act as an adapter protein that links AcrB and TolC stably together. In Escherichia coli O157:H7, this protein is Multidrug efflux pump subunit AcrA (acrA).